Consider the following 250-residue polypeptide: Short-chain dehydrogenase RED3 (250 aa).

4 residues coordinate NADP(+): isoleucine 16, serine 35, glutamate 63, and asparagine 91. Active-site proton donor residues include serine 145 and tyrosine 164. NADP(+)-binding residues include tyrosine 164, lysine 168, valine 195, and serine 197. The active-site Lowers pKa of active site Tyr is lysine 168.

It belongs to the short-chain dehydrogenases/reductases (SDR) family.

It functions in the pathway polyketide biosynthesis. In terms of biological role, short-chain dehydrogenase; part of the gene cluster that mediates the biosynthesis of pyriculol and pyriculariol, two heptaketides that induce lesion formation upon application on rice leaves but are dispensable for pathogenicity. The highly reducing polyketide synthase synthesizes the heptaketide backbone of pyriculol and pyriculariol. Pyriculol and pyriculariol contain several hydroxyl moieties and double bonds, so it can be assumed that several reduction steps occur during biosynthesis. These reactions could be executed by PKS19 itself or partly by the tailoring enzymes OXR1, OXR2, RED1, RED2 or RED3, identified within the cluster. The FAD-linked oxidoreductase OXR1 is the only tailoring enzyme for which the function has been determined yet, and is involved in the oxidation of dihydropyriculol and dihydropyriculariol into pyriculol and pyriculariol, respectively. The sequence is that of Short-chain dehydrogenase RED3 from Pyricularia oryzae (strain 70-15 / ATCC MYA-4617 / FGSC 8958) (Rice blast fungus).